We begin with the raw amino-acid sequence, 741 residues long: MKILRQLWNQKGLDAAVEDVPEDRYGFGNIAENISRSILTLPLEASNVVGIEGAWGSGKTSLLNLILRNLALKKDAHTHVLHISPWLSGGSPVEALFLPVATVIQQEMEIRYPPKGFKKLWRKYLLSPEAQKVIEYAQDTSSRVLPLVQYIGQFSSIINWIAGGIKVFSDSRLAVDQKTTTKLRAEIAGQLVSLDLKFIVVMDDLDRLEPSQVAEVFRLVRAVADLPRFTHILCYDRQIITHAVEHALNIEDGSRYLQKIIQLSFKLPRPEAFDLRNEFRQRAEALYQQINNQPPDSGMVRDLIAVTDTYGAALSTPREIHQAINSLIFLYPGMRDFVYFPDLCLLQLIRVTNPALYDWTEHYLTERSVIETGQGMLSDGEKADFREGLIRCMKTFRASNADSFLTLADWIPGISGHNDEYLNLFEPVSEDFRHIQTTGKRLSSLTHWRYYFAFSSPQNVLPPEFFRQLFEQAGVSEKQQQLSELLLSKINSVGSLSGTWFEHILSRLTPGLIRERNFEECAGLVHFFFDHTDEVSTRFSIRNPWFSLREMAINEVVRHLLKHMQDIDETRTITLMEKLIVTGASPFWIADFMRDLIWEHGLAQNAVPSPSDALFSRDITERLRDRFAERMNQPELQQQLLLRKSLLGYLYAWRDMSSGETVKQWVREVTTTDEGLVNLLIRLQTSVFSSHRGAYRRIARDQVSPFFDDWPAVEEKLKVMLSGNELTPEQEALKTALENDD.

Positions 27-334 (FGNIAENISR…NSLIFLYPGM (308 aa)) constitute a KAP NTPase domain.

Functionally, responsible for the exclusion of phage T7 by plasmid F. Growth of bacteriophage T7 is inhibited in cells of E.coli that carries the plasmid F. The sequence is that of Phage T7 exclusion protein (pifA) from Escherichia coli (strain K12).